The primary structure comprises 118 residues: Ribosome-binding factor A (118 aa).

The protein belongs to the RbfA family. In terms of assembly, monomer. Binds 30S ribosomal subunits, but not 50S ribosomal subunits or 70S ribosomes.

The protein resides in the cytoplasm. In terms of biological role, one of several proteins that assist in the late maturation steps of the functional core of the 30S ribosomal subunit. Associates with free 30S ribosomal subunits (but not with 30S subunits that are part of 70S ribosomes or polysomes). Required for efficient processing of 16S rRNA. May interact with the 5'-terminal helix region of 16S rRNA. This is Ribosome-binding factor A from Bacillus cereus (strain ATCC 10987 / NRS 248).